The primary structure comprises 142 residues: Universal stress protein C (142 aa).

This sequence belongs to the universal stress protein A family.

The protein resides in the cytoplasm. In terms of biological role, required for resistance to DNA-damaging agents. The polypeptide is Universal stress protein C (uspC) (Escherichia coli O6:H1 (strain CFT073 / ATCC 700928 / UPEC)).